The chain runs to 350 residues: Probable flap endonuclease 1 homolog (350 aa).

Residues 1–95 (MGITKLAHLI…AVLEKRAQST (95 aa)) are N-domain. Position 34 (Asp-34) interacts with Mg(2+). Residue Arg-61 coordinates DNA. Residues Asp-77, Glu-130, Glu-132, Asp-151, and Asp-153 each contribute to the Mg(2+) site. Residues 110 to 223 (NQECLRLLHL…SRALKLIKEH (114 aa)) form an I-domain region. Glu-130 provides a ligand contact to DNA. Residues Gly-201 and Asp-203 each contribute to the DNA site. A Mg(2+)-binding site is contributed by Asp-203. Residues 317 to 325 (RQSRLEDFF) are interaction with PCNA.

The protein belongs to the XPG/RAD2 endonuclease family. FEN1 subfamily. Interacts with PCNA. Three molecules of fen1 bind to one PCNA trimer with each molecule binding to one PCNA monomer. PCNA stimulates the nuclease activity without altering cleavage specificity. Mg(2+) is required as a cofactor. In terms of processing, phosphorylated. Phosphorylation upon DNA damage induces relocalization to the nuclear plasma.

It is found in the nucleus. It localises to the nucleolus. The protein resides in the nucleoplasm. Its subcellular location is the mitochondrion. In terms of biological role, structure-specific nuclease with 5'-flap endonuclease and 5'-3' exonuclease activities involved in DNA replication and repair. During DNA replication, cleaves the 5'-overhanging flap structure that is generated by displacement synthesis when DNA polymerase encounters the 5'-end of a downstream Okazaki fragment. It enters the flap from the 5'-end and then tracks to cleave the flap base, leaving a nick for ligation. Also involved in the long patch base excision repair (LP-BER) pathway, by cleaving within the apurinic/apyrimidinic (AP) site-terminated flap. Acts as a genome stabilization factor that prevents flaps from equilibrating into structures that lead to duplications and deletions. Also possesses 5'-3' exonuclease activity on nicked or gapped double-stranded DNA, and exhibits RNase H activity. Also involved in replication and repair of rDNA and in repairing mitochondrial DNA. This chain is Probable flap endonuclease 1 homolog, found in Danio rerio (Zebrafish).